Reading from the N-terminus, the 331-residue chain is Barley B recombinant-like protein D (331 aa).

Residues 43-101 are a coiled coil; it reads ALMNDRDNAIRERDHALAEKKAAIAERDMAFTQRDAAMAERNAAVVERDNALAALELAR. An alanine-zipper region spans residues 51–86; the sequence is AIRERDHALAEKKAAIAERDMAFTQRDAAMAERNAA. Polar residues predominate over residues 104–122; sequence GLNMNNGNGFPQGSLSGSK. 2 disordered regions span residues 104 to 140 and 156 to 205; these read GLNM…PLQL and AYPI…VGMS.

It belongs to the BBR/BPC family. In terms of assembly, homodimer. Heterodimer.

The protein resides in the nucleus. In terms of biological role, transcriptional regulator that specifically binds to GA-rich elements (GAGA-repeats) present in regulatory sequences of genes involved in developmental processes. This is Barley B recombinant-like protein D from Oryza sativa subsp. japonica (Rice).